A 218-amino-acid polypeptide reads, in one-letter code: Small ribosomal subunit protein mS34 (218 aa).

The interval 178–218 is disordered; sequence RQKNGDPSTEEPMLSLERIRTDPWDYPENQEAKKKTKGTAV.

Belongs to the mitochondrion-specific ribosomal protein mS34 family. Component of the mitochondrial ribosome small subunit (28S) which comprises a 12S rRNA and about 30 distinct proteins.

The protein resides in the mitochondrion. In terms of biological role, required for mitochondrial translation, plays a role in maintaining the stability of the small ribosomal subunit and the 12S rRNA that are required for mitoribosome formation. This chain is Small ribosomal subunit protein mS34, found in Bos taurus (Bovine).